Reading from the N-terminus, the 317-residue chain is Melanocyte-stimulating hormone receptor (317 aa).

Residues 1–37 are Extracellular-facing; sequence MPVQGSQRRLLGSLNSTPTATPHLGLAANQTGARCRE. N-linked (GlcNAc...) asparagine glycosylation occurs at N29. The helical transmembrane segment at 38–63 threads the bilayer; the sequence is VSIPDGLFLSLGLVSLVENVLVVTAI. The Cytoplasmic portion of the chain corresponds to 64 to 72; the sequence is AKNRNLHSP. A helical membrane pass occupies residues 73–93; sequence MYCFICCLALSDLLVSGSNML. At 94 to 118 the chain is on the extracellular side; sequence ETAVTLLLEAGALVARAAVVQQLDN. The chain crosses the membrane as a helical span at residues 119-140; that stretch reads VIDVITCSSMLSSLCFLGAIAV. Over 141 to 163 the chain is Cytoplasmic; that stretch reads DRYISIFYALRYHSIVTLPRAQR. Residues 164-183 traverse the membrane as a helical segment; that stretch reads AIAAIWVASVLCSTLFIAYY. The Extracellular portion of the chain corresponds to 184–191; it reads DHAAVLLC. A helical transmembrane segment spans residues 192–211; it reads LVVFFLAMLVLMAVLYVHML. Topologically, residues 212–240 are cytoplasmic; sequence ARACQHAQGIARLHKRQRLAHQGFGLKGA. Residues 241-266 form a helical membrane-spanning segment; sequence ATLTILLGIFFLCWGPFFLHLTLIVL. At 267–279 the chain is on the extracellular side; sequence CPQHPTCSCIFKN. A helical membrane pass occupies residues 280–300; the sequence is FNLFLALIICNAIIDPLIYAF. At 301–317 the chain is on the cytoplasmic side; that stretch reads RSQELRRTLKEVLLCSW. C315 is lipidated: S-palmitoyl cysteine.

This sequence belongs to the G-protein coupled receptor 1 family. As to quaternary structure, interacts with MGRN1, but does not undergo MGRN1-mediated ubiquitination; this interaction competes with GNAS-binding and thus inhibits agonist-induced cAMP production. Interacts with OPN3; the interaction results in a decrease in MC1R-mediated cAMP signaling and ultimately a decrease in melanin production in melanocytes. In terms of tissue distribution, expressed in the adrenal gland.

The protein localises to the cell membrane. In terms of biological role, receptor for MSH (alpha, beta and gamma) and ACTH. The activity of this receptor is mediated by G proteins which activate adenylate cyclase. Mediates melanogenesis, the production of eumelanin (black/brown) and phaeomelanin (red/yellow), via regulation of cAMP signaling in melanocytes. The protein is Melanocyte-stimulating hormone receptor (MC1R) of Macaca mulatta (Rhesus macaque).